A 101-amino-acid polypeptide reads, in one-letter code: Small ribosomal subunit protein uS14 (101 aa).

Belongs to the universal ribosomal protein uS14 family. Part of the 30S ribosomal subunit. Contacts proteins S3 and S10.

Binds 16S rRNA, required for the assembly of 30S particles and may also be responsible for determining the conformation of the 16S rRNA at the A site. In Blochmanniella pennsylvanica (strain BPEN), this protein is Small ribosomal subunit protein uS14.